Consider the following 442-residue polypeptide: Pentatricopeptide repeat-containing protein At2g27800, mitochondrial (442 aa).

The transit peptide at 1–67 (MSATRSTFLG…SFLPSIHVRF (67 aa)) directs the protein to the mitochondrion. 6 PPR repeats span residues 206 to 236 (NENL…MVTS), 244 to 286 (TIRT…GIEP), 287 to 322 (DVFA…DCEP), 323 to 357 (NSFT…GFVP), 358 to 392 (NGKS…GRVV), and 393 to 427 (DFIS…QLVD).

This sequence belongs to the PPR family. P subfamily.

The protein localises to the mitochondrion. The sequence is that of Pentatricopeptide repeat-containing protein At2g27800, mitochondrial from Arabidopsis thaliana (Mouse-ear cress).